A 503-amino-acid polypeptide reads, in one-letter code: Probable cytosol aminopeptidase (503 aa).

Mn(2+) is bound by residues Lys-270 and Asp-275. Lys-282 is a catalytic residue. The Mn(2+) site is built by Asp-293, Asp-352, and Glu-354. Residue Arg-356 is part of the active site.

Belongs to the peptidase M17 family. Mn(2+) serves as cofactor.

The protein localises to the cytoplasm. The catalysed reaction is Release of an N-terminal amino acid, Xaa-|-Yaa-, in which Xaa is preferably Leu, but may be other amino acids including Pro although not Arg or Lys, and Yaa may be Pro. Amino acid amides and methyl esters are also readily hydrolyzed, but rates on arylamides are exceedingly low.. It catalyses the reaction Release of an N-terminal amino acid, preferentially leucine, but not glutamic or aspartic acids.. Functionally, presumably involved in the processing and regular turnover of intracellular proteins. Catalyzes the removal of unsubstituted N-terminal amino acids from various peptides. This chain is Probable cytosol aminopeptidase, found in Klebsiella pneumoniae subsp. pneumoniae (strain ATCC 700721 / MGH 78578).